We begin with the raw amino-acid sequence, 504 residues long: UDP-N-acetylmuramoylalanine--D-glutamate ligase (504 aa).

129 to 135 contributes to the ATP binding site; that stretch reads GTNGKTT.

This sequence belongs to the MurCDEF family.

It localises to the cytoplasm. The catalysed reaction is UDP-N-acetyl-alpha-D-muramoyl-L-alanine + D-glutamate + ATP = UDP-N-acetyl-alpha-D-muramoyl-L-alanyl-D-glutamate + ADP + phosphate + H(+). The protein operates within cell wall biogenesis; peptidoglycan biosynthesis. Functionally, cell wall formation. Catalyzes the addition of glutamate to the nucleotide precursor UDP-N-acetylmuramoyl-L-alanine (UMA). This chain is UDP-N-acetylmuramoylalanine--D-glutamate ligase, found in Burkholderia mallei (strain NCTC 10247).